The primary structure comprises 325 residues: DNA-directed RNA polymerase subunit alpha (325 aa).

The segment at 1 to 231 (MQTSLLKPKI…DQLSVFAALE (231 aa)) is alpha N-terminal domain (alpha-NTD). The interval 246-325 (IDPILLRPVD…ENWPPAGLDK (80 aa)) is alpha C-terminal domain (alpha-CTD).

The protein belongs to the RNA polymerase alpha chain family. In terms of assembly, homodimer. The RNAP catalytic core consists of 2 alpha, 1 beta, 1 beta' and 1 omega subunit. When a sigma factor is associated with the core the holoenzyme is formed, which can initiate transcription.

It catalyses the reaction RNA(n) + a ribonucleoside 5'-triphosphate = RNA(n+1) + diphosphate. Functionally, DNA-dependent RNA polymerase catalyzes the transcription of DNA into RNA using the four ribonucleoside triphosphates as substrates. This chain is DNA-directed RNA polymerase subunit alpha, found in Burkholderia mallei (strain NCTC 10247).